Reading from the N-terminus, the 303-residue chain is MTHSRTALVLIHPATTTRPELLTAAKQHSSLSGANIEQHLVNKLNDGSLQLQDNSYDVIFYVTPEAADEILFPRRLIGVLAAALRAGGSLHGLYDKYQVDALLSGFDIVREPTYHWQKRAVTASAPVKLAPRQPVSAAGLPRFKRASAPSPAAVTPTLDEVPPAAVDPVKAALLDSAAGDAPIAENDLVVGHDSTPITLLTCGRTQTRRRKACKDCTCGLREENEKEISDTHARQEKLLLGDAVKFSEPELAEIDFTIEGKKVGGCGSCSLGDAFRCSGCPYLGLPAFKPGQPINLSAISDDL.

Positions 1–125 (MTHSRTALVL…WQKRAVTASA (125 aa)) are N-terminal SAM-like domain. The tract at residues 126–188 (PVKLAPRQPV…GDAPIAENDL (63 aa)) is linker. [2Fe-2S] cluster contacts are provided by Cys-202, Cys-213, Cys-216, and Cys-218. A fe-S binding site A region spans residues 202-218 (CGRTQTRRRKACKDCTC). The [4Fe-4S] cluster site is built by Cys-266, Cys-269, Cys-277, and Cys-280. 2 short sequence motifs (cx2C motif) span residues 266 to 269 (CGSC) and 277 to 280 (CSGC). Residues 266–280 (CGSCSLGDAFRCSGC) form a fe-S binding site B region.

It belongs to the anamorsin family. In terms of assembly, monomer. Interacts with TAH18. Interacts with MIA40. [2Fe-2S] cluster serves as cofactor. The cofactor is [4Fe-4S] cluster.

The protein localises to the cytoplasm. It is found in the mitochondrion intermembrane space. In terms of biological role, component of the cytosolic iron-sulfur (Fe-S) protein assembly (CIA) machinery required for the maturation of extramitochondrial Fe-S proteins. Part of an electron transfer chain functioning in an early step of cytosolic Fe-S biogenesis, facilitating the de novo assembly of a [4Fe-4S] cluster on the scaffold complex CFD1-NBP35. Electrons are transferred to DRE2 from NADPH via the FAD- and FMN-containing protein TAH18. TAH18-DRE2 are also required for the assembly of the diferric tyrosyl radical cofactor of ribonucleotide reductase (RNR), probably by providing electrons for reduction during radical cofactor maturation in the catalytic small subunit RNR2. This is Fe-S cluster assembly protein DRE2 from Eremothecium gossypii (strain ATCC 10895 / CBS 109.51 / FGSC 9923 / NRRL Y-1056) (Yeast).